The following is a 154-amino-acid chain: Ascorbate-specific PTS system EIIA component (154 aa).

The 145-residue stretch at 6–150 folds into the PTS EIIA type-2 domain; it reads SLAENNSIRL…QEVLDLIDRT (145 aa). The Tele-phosphohistidine intermediate role is filled by histidine 68. At histidine 68 the chain carries Phosphohistidine.

Its subcellular location is the cytoplasm. The phosphoenolpyruvate-dependent sugar phosphotransferase system (sugar PTS), a major carbohydrate active transport system, catalyzes the phosphorylation of incoming sugar substrates concomitantly with their translocation across the cell membrane. The enzyme II UlaABC PTS system is involved in ascorbate transport. In Salmonella choleraesuis (strain SC-B67), this protein is Ascorbate-specific PTS system EIIA component (ulaC).